The sequence spans 251 residues: Triosephosphate isomerase (251 aa).

9 to 11 (NWK) is a binding site for substrate. His-95 serves as the catalytic Electrophile. Glu-167 functions as the Proton acceptor in the catalytic mechanism. Residues Gly-173, Ser-213, and 234 to 235 (GG) each bind substrate.

The protein belongs to the triosephosphate isomerase family. Homodimer.

It localises to the cytoplasm. The enzyme catalyses D-glyceraldehyde 3-phosphate = dihydroxyacetone phosphate. It functions in the pathway carbohydrate biosynthesis; gluconeogenesis. It participates in carbohydrate degradation; glycolysis; D-glyceraldehyde 3-phosphate from glycerone phosphate: step 1/1. Its function is as follows. Involved in the gluconeogenesis. Catalyzes stereospecifically the conversion of dihydroxyacetone phosphate (DHAP) to D-glyceraldehyde-3-phosphate (G3P). The chain is Triosephosphate isomerase from Carboxydothermus hydrogenoformans (strain ATCC BAA-161 / DSM 6008 / Z-2901).